Here is a 390-residue protein sequence, read N- to C-terminus: S-adenosylmethionine synthase 2 (390 aa).

Glutamate 9 is a Mg(2+) binding site. Residue histidine 15 participates in ATP binding. Glutamate 43 is a K(+) binding site. Residues glutamate 56 and glutamine 99 each coordinate L-methionine. Residues 167–169 (DGK), 235–238 (SGRF), aspartate 246, 252–253 (RK), alanine 269, lysine 273, and lysine 277 each bind ATP. Aspartate 246 serves as a coordination point for L-methionine. Lysine 277 lines the L-methionine pocket.

This sequence belongs to the AdoMet synthase family. In terms of assembly, homotetramer. Requires Mn(2+) as cofactor. It depends on Mg(2+) as a cofactor. Co(2+) serves as cofactor. The cofactor is K(+).

It is found in the cytoplasm. The enzyme catalyses L-methionine + ATP + H2O = S-adenosyl-L-methionine + phosphate + diphosphate. It participates in amino-acid biosynthesis; S-adenosyl-L-methionine biosynthesis; S-adenosyl-L-methionine from L-methionine: step 1/1. Its function is as follows. Catalyzes the formation of S-adenosylmethionine from methionine and ATP. The reaction comprises two steps that are both catalyzed by the same enzyme: formation of S-adenosylmethionine (AdoMet) and triphosphate, and subsequent hydrolysis of the triphosphate. The chain is S-adenosylmethionine synthase 2 (SAM2) from Petunia hybrida (Petunia).